A 186-amino-acid chain; its full sequence is Ribosome-recycling factor (186 aa).

This sequence belongs to the RRF family.

It is found in the cytoplasm. Its function is as follows. Responsible for the release of ribosomes from messenger RNA at the termination of protein biosynthesis. May increase the efficiency of translation by recycling ribosomes from one round of translation to another. This chain is Ribosome-recycling factor, found in Brucella melitensis biotype 2 (strain ATCC 23457).